Consider the following 121-residue polypeptide: Holo-[acyl-carrier-protein] synthase (121 aa).

The Mg(2+) site is built by D8 and E58.

This sequence belongs to the P-Pant transferase superfamily. AcpS family. In terms of assembly, homotrimer. Requires Mg(2+) as cofactor.

It localises to the cytoplasm. The catalysed reaction is apo-[ACP] + CoA = holo-[ACP] + adenosine 3',5'-bisphosphate + H(+). Transfers the 4'-phosphopantetheine moiety from coenzyme A to a Ser of fatty acid acyl-carrier-protein ACP. Also modifies the D-alanyl carrier protein but fails to recognize PCP and AcpK, an acyl carrier protein of secondary metabolism. The polypeptide is Holo-[acyl-carrier-protein] synthase (Bacillus subtilis (strain 168)).